Consider the following 162-residue polypeptide: 2-C-methyl-D-erythritol 2,4-cyclodiphosphate synthase (162 aa).

Residues aspartate 12 and histidine 14 each contribute to the a divalent metal cation site. 4-CDP-2-C-methyl-D-erythritol 2-phosphate contacts are provided by residues 12 to 14 (DVH) and 38 to 39 (HS). Histidine 46 contacts a divalent metal cation. Residues 60 to 62 (DIG), 136 to 139 (TTTE), phenylalanine 143, and arginine 146 each bind 4-CDP-2-C-methyl-D-erythritol 2-phosphate.

The protein belongs to the IspF family. Homotrimer. Requires a divalent metal cation as cofactor.

The catalysed reaction is 4-CDP-2-C-methyl-D-erythritol 2-phosphate = 2-C-methyl-D-erythritol 2,4-cyclic diphosphate + CMP. It participates in isoprenoid biosynthesis; isopentenyl diphosphate biosynthesis via DXP pathway; isopentenyl diphosphate from 1-deoxy-D-xylulose 5-phosphate: step 4/6. In terms of biological role, involved in the biosynthesis of isopentenyl diphosphate (IPP) and dimethylallyl diphosphate (DMAPP), two major building blocks of isoprenoid compounds. Catalyzes the conversion of 4-diphosphocytidyl-2-C-methyl-D-erythritol 2-phosphate (CDP-ME2P) to 2-C-methyl-D-erythritol 2,4-cyclodiphosphate (ME-CPP) with a corresponding release of cytidine 5-monophosphate (CMP). This is 2-C-methyl-D-erythritol 2,4-cyclodiphosphate synthase from Porphyromonas gingivalis (strain ATCC 33277 / DSM 20709 / CIP 103683 / JCM 12257 / NCTC 11834 / 2561).